Here is a 386-residue protein sequence, read N- to C-terminus: MDLMEYQAKELFAKHDVPVTLGIVAHTPDEAQAAAEQLGVVVVKAQVKAGGRGKAGGVKLAKTPEEARTHAEAILGMEIKGLRVNRVLIAPAASIEEEYYFSFLLDRANRRYLCIASVEGGVEIEEVAKTNPDAVRQIPIDPGAGVDEAKAREIVADAKFPEALTEQAVQTVLALWKVFVEEDATLVEVNPLARLAGDKLEALDGKVSLDENAEFRHEEHASFVIREEEDPLESAAKDKGLNYVKLDGSVGIIGNGAGLVMSTLDVVAYAGEKHGGVKPANFLDIGGGANAQVMADGLHVILGDEQVKAVFVNVFGGITACDEVANGIVGALDILGEDATKPLVIRLDGNNADEGRRILTEAAHPLVTMVDTMDGAADKAAELANA.

The ATP-grasp domain maps to 9–235 (KELFAKHDVP…REEEDPLESA (227 aa)). ATP contacts are provided by residues Lys44, 51–53 (GRG), Ala93, and Glu98. Residues Asn190 and Asp204 each contribute to the Mg(2+) site. Residues Asn255 and 317–319 (GIT) contribute to the substrate site.

Belongs to the succinate/malate CoA ligase beta subunit family. Heterotetramer of two alpha and two beta subunits. It depends on Mg(2+) as a cofactor.

The enzyme catalyses succinate + ATP + CoA = succinyl-CoA + ADP + phosphate. The catalysed reaction is GTP + succinate + CoA = succinyl-CoA + GDP + phosphate. It participates in carbohydrate metabolism; tricarboxylic acid cycle; succinate from succinyl-CoA (ligase route): step 1/1. Its function is as follows. Succinyl-CoA synthetase functions in the citric acid cycle (TCA), coupling the hydrolysis of succinyl-CoA to the synthesis of either ATP or GTP and thus represents the only step of substrate-level phosphorylation in the TCA. The beta subunit provides nucleotide specificity of the enzyme and binds the substrate succinate, while the binding sites for coenzyme A and phosphate are found in the alpha subunit. In Nocardioides sp. (strain ATCC BAA-499 / JS614), this protein is Succinate--CoA ligase [ADP-forming] subunit beta.